We begin with the raw amino-acid sequence, 300 residues long: Shikimate kinase, chloroplastic (300 aa).

A chloroplast-targeting transit peptide spans 1 to 65 (MEARVSQSLQ…SDRRVQLKVS (65 aa)). Position 111-118 (111-118 (GMMGCGKT)) interacts with ATP. T118 contributes to the Mg(2+) binding site. Residues D136, R161, and G183 each contribute to the substrate site. R222 contacts ATP.

The protein belongs to the shikimate kinase family. The cofactor is Mg(2+).

It is found in the plastid. The protein resides in the chloroplast. It catalyses the reaction shikimate + ATP = 3-phosphoshikimate + ADP + H(+). It participates in metabolic intermediate biosynthesis; chorismate biosynthesis; chorismate from D-erythrose 4-phosphate and phosphoenolpyruvate: step 5/7. Catalyzes the specific phosphorylation of the 3-hydroxyl group of shikimic acid using ATP as a cosubstrate. The chain is Shikimate kinase, chloroplastic (SK) from Solanum lycopersicum (Tomato).